We begin with the raw amino-acid sequence, 82 residues long: M-zodatoxin-Lt3a (82 aa).

The first 22 residues, 1–22, serve as a signal peptide directing secretion; that stretch reads MKTYAVLLALVVAFVCIAESTG. Positions 23-61 are excised as a propeptide; that stretch reads YPVEDLEDDELTELEAEALLEDLLEDLELEDLDYNEEAR. The Processing quadruplet motif motif lies at 58 to 61; sequence EEAR. Position 81 is an alanine amide (Ala-81).

It belongs to the cationic peptide 03 (latarcin) family. 03 subfamily. Cleavage of the propeptide depends on the processing quadruplet motif (XXXR, with at least one of X being E). In terms of tissue distribution, expressed by the venom gland.

The protein localises to the secreted. The protein resides in the target cell membrane. In terms of biological role, it has antimicrobial activity against Gram-positive bacteria (A.globiformis VKM Ac-1112 (MIC=0.3 uM), and B.subtilis VKM B-501 (MIC=1.2 uM)), Gram-negative bacteria (E.coli DH5-alpha (MIC=2.5 uM), E.coli MH1 (MIC=6.0 uM), and P.aeruginosa PAO1 (MIC&gt;40 uM)), and yeasts (P.pastoris GS115 (MIC=20 uM), and S.cerevisiae Y190 (MIC=20 uM)). Causes paralysis, but is not lethal when injected into insect (M.domestica) larvae. A second study reports antibacterial activity against E.coli (MIC=100 uM) and S.aureus (MIC=84 uM). Furthermore, increases efficacy of antibiotics (chloramphenicol, streptomycin, kanamycin, novobiocin) when tested against E.coli, probably by facilitating their incorporation into the bacteria. The protein is M-zodatoxin-Lt3a of Lachesana tarabaevi (Spider).